The following is a 430-amino-acid chain: Oleandomycin glycosyltransferase (430 aa).

The disordered stretch occupies residues 385 to 430 (GGTRRAADLIEAELPARHERQEPVGDRPNVGDRPAGVRSDRQRSAL). A compositionally biased stretch (basic and acidic residues) spans 386–409 (GTRRAADLIEAELPARHERQEPVG).

The protein belongs to the UDP-glycosyltransferase family.

Functionally, specifically inactivates oleandomycin via 2'-O-glycosylation using UDP-glucose. The polypeptide is Oleandomycin glycosyltransferase (oleD) (Streptomyces antibioticus).